The primary structure comprises 466 residues: 3-isopropylmalate dehydratase large subunit 1 (466 aa).

[4Fe-4S] cluster-binding residues include Cys-347, Cys-407, and Cys-410.

Belongs to the aconitase/IPM isomerase family. LeuC type 1 subfamily. Heterodimer of LeuC and LeuD. [4Fe-4S] cluster serves as cofactor.

It catalyses the reaction (2R,3S)-3-isopropylmalate = (2S)-2-isopropylmalate. It functions in the pathway amino-acid biosynthesis; L-leucine biosynthesis; L-leucine from 3-methyl-2-oxobutanoate: step 2/4. Catalyzes the isomerization between 2-isopropylmalate and 3-isopropylmalate, via the formation of 2-isopropylmaleate. This is 3-isopropylmalate dehydratase large subunit 1 from Salmonella choleraesuis (strain SC-B67).